The sequence spans 449 residues: UNC93-like protein MFSD11 (449 aa).

A helical membrane pass occupies residues Leu8–Cys28. Asn40 carries N-linked (GlcNAc...) asparagine glycosylation. 5 consecutive transmembrane segments (helical) span residues Ala53–Val73, Gly74–Ile94, Pro96–Trp116, Ile138–Trp158, and Arg170–Ile190. Ser204 carries the phosphoserine modification. 6 consecutive transmembrane segments (helical) span residues Met239–Val259, Leu277–Gly297, Pro309–Met329, Phe359–Leu379, Ala385–Tyr405, and Leu410–Phe430.

Belongs to the unc-93 family.

The protein localises to the membrane. In Macaca fascicularis (Crab-eating macaque), this protein is UNC93-like protein MFSD11 (MFSD11).